Consider the following 137-residue polypeptide: UBAP1-MVB12-associated (UMA)-domain containing protein 1 (137 aa).

A disordered region spans residues 1–72; sequence MFHFFRKPPE…VSDPEMENKA (72 aa). Residues 32 to 44 are compositionally biased toward basic and acidic residues; it reads DEQRMTARGKTSD. Over residues 50 to 63 the composition is skewed to polar residues; the sequence is PLETNKENSSSVTV. The region spanning 86-134 is the UMA domain; it reads LSDVPFTLAPHVLAVQGTITDLPDHLLSYDGSENLSRFWYDFTLENSVL.

This Homo sapiens (Human) protein is UBAP1-MVB12-associated (UMA)-domain containing protein 1.